The chain runs to 376 residues: Succinyl-diaminopimelate desuccinylase (376 aa).

Zn(2+) is bound at residue H66. D68 is an active-site residue. D99 contacts Zn(2+). The active-site Proton acceptor is the E133. 3 residues coordinate Zn(2+): E134, E162, and H348.

It belongs to the peptidase M20A family. DapE subfamily. As to quaternary structure, homodimer. The cofactor is Zn(2+). Co(2+) serves as cofactor.

It carries out the reaction N-succinyl-(2S,6S)-2,6-diaminopimelate + H2O = (2S,6S)-2,6-diaminopimelate + succinate. Its pathway is amino-acid biosynthesis; L-lysine biosynthesis via DAP pathway; LL-2,6-diaminopimelate from (S)-tetrahydrodipicolinate (succinylase route): step 3/3. In terms of biological role, catalyzes the hydrolysis of N-succinyl-L,L-diaminopimelic acid (SDAP), forming succinate and LL-2,6-diaminopimelate (DAP), an intermediate involved in the bacterial biosynthesis of lysine and meso-diaminopimelic acid, an essential component of bacterial cell walls. This Xanthomonas oryzae pv. oryzae (strain MAFF 311018) protein is Succinyl-diaminopimelate desuccinylase.